We begin with the raw amino-acid sequence, 1033 residues long: Potassium-transporting ATPase alpha chain 2 (1033 aa).

Over Met-1–Pro-96 the chain is Cytoplasmic. Residues Glu-97–Ala-117 form a helical membrane-spanning segment. Over Ile-118–Tyr-140 the chain is Lumenal. The chain crosses the membrane as a helical span at residues Leu-141–Ala-161. Residues Lys-162–Ile-297 lie on the Cytoplasmic side of the membrane. The chain crosses the membrane as a helical span at residues Glu-298–Ile-317. The Lumenal portion of the chain corresponds to Ile-318–Ser-329. Residues Ile-330–Ala-347 traverse the membrane as a helical segment. The Cytoplasmic segment spans residues Thr-348–Leu-781. The 4-aspartylphosphate intermediate role is filled by Asp-385. Residues Asp-726 and Asp-730 each coordinate Mg(2+). Residues Lys-782–Val-801 traverse the membrane as a helical segment. The Lumenal segment spans residues Tyr-802–Ile-811. Residues Gly-812–Ala-832 form a helical membrane-spanning segment. The Cytoplasmic portion of the chain corresponds to Tyr-833–Arg-852. A helical membrane pass occupies residues Leu-853–Phe-875. Over Leu-876–Gly-927 the chain is Lumenal. Residues Tyr-928–Lys-947 traverse the membrane as a helical segment. Residues Thr-948 to Asn-961 are Cytoplasmic-facing. Phosphoserine; by PKA is present on Ser-952. A helical transmembrane segment spans residues Lys-962–Cys-980. Over Gly-981–Val-995 the chain is Lumenal. The helical transmembrane segment at Gln-996 to Lys-1016 threads the bilayer. Residues Leu-1017–Tyr-1033 are Cytoplasmic-facing.

This sequence belongs to the cation transport ATPase (P-type) (TC 3.A.3) family. Type IIC subfamily. In terms of assembly, composed of two subunits: alpha (catalytic) and beta. As to expression, found in skin, kidney and distal colon.

It is found in the membrane. The catalysed reaction is K(+)(out) + ATP + H2O + H(+)(in) = K(+)(in) + ADP + phosphate + 2 H(+)(out). In terms of biological role, catalyzes the hydrolysis of ATP coupled with the exchange of H(+) and K(+) ions across the plasma membrane. Responsible for potassium absorption in various tissues. The protein is Potassium-transporting ATPase alpha chain 2 (ATP12A) of Cavia porcellus (Guinea pig).